The chain runs to 493 residues: Glutamyl-tRNA(Gln) amidotransferase subunit A (493 aa).

Active-site charge relay system residues include Lys-79 and Ser-159. Ser-183 serves as the catalytic Acyl-ester intermediate.

This sequence belongs to the amidase family. GatA subfamily. As to quaternary structure, heterotrimer of A, B and C subunits.

The enzyme catalyses L-glutamyl-tRNA(Gln) + L-glutamine + ATP + H2O = L-glutaminyl-tRNA(Gln) + L-glutamate + ADP + phosphate + H(+). Allows the formation of correctly charged Gln-tRNA(Gln) through the transamidation of misacylated Glu-tRNA(Gln) in organisms which lack glutaminyl-tRNA synthetase. The reaction takes place in the presence of glutamine and ATP through an activated gamma-phospho-Glu-tRNA(Gln). The polypeptide is Glutamyl-tRNA(Gln) amidotransferase subunit A (Brucella suis (strain ATCC 23445 / NCTC 10510)).